The chain runs to 88 residues: Small ribosomal subunit protein bS20 (88 aa).

The tract at residues 1 to 21 is disordered; it reads MANTTSAKKATRKIARRTAVN.

The protein belongs to the bacterial ribosomal protein bS20 family.

Binds directly to 16S ribosomal RNA. This is Small ribosomal subunit protein bS20 from Agrobacterium fabrum (strain C58 / ATCC 33970) (Agrobacterium tumefaciens (strain C58)).